The sequence spans 232 residues: Protein FAM246B (232 aa).

A compositionally biased stretch (basic and acidic residues) spans 19–31 (EVLRRVTGRRRDP). Disordered stretches follow at residues 19–47 (EVLRRVTGRRRDPGPQSNGPGREDARAPG), 80–101 (AAGAGERTGAHSRGSVCSVCGE), 151–179 (ALLPPPPPSPPARREPRAVPRAAPRGPTL), and 191–232 (AASR…GGGD). Over residues 211 to 220 (APARKNHKKM) the composition is skewed to basic residues.

This sequence belongs to the FAM246 family.

The protein is Protein FAM246B of Homo sapiens (Human).